The chain runs to 149 residues: Small ribosomal subunit protein uS19w (149 aa).

Belongs to the universal ribosomal protein uS19 family.

It is found in the cytoplasm. The protein is Small ribosomal subunit protein uS19w (RPS15E) of Arabidopsis thaliana (Mouse-ear cress).